Here is a 263-residue protein sequence, read N- to C-terminus: Neuferricin (263 aa).

Residues 1–22 form the signal peptide; it reads MLRICGLGVVLSLAVAAVAVMA. Residues 35 to 134 enclose the Cytochrome b5 heme-binding domain; sequence IRLFLPEELA…KNYVFVGRLV (100 aa). Residues 220 to 249 form a disordered region; the sequence is VRTTGPPSDQQDNPRHSNHGDLDNPNLEEY. A compositionally biased stretch (basic and acidic residues) spans 231-241; sequence DNPRHSNHGDL.

The protein belongs to the cytochrome b5 family. MAPR subfamily. As to expression, expressed in various tissues including brain, heart, adrenal gland, and kidney. In the brain, mainly expressed in pyramidal cells around the CA3 region of Ammon horn in hippocampus. Present in brain (at protein level).

The protein resides in the secreted. Functionally, heme-binding protein which promotes neuronal but not astrocyte differentiation. The sequence is that of Neuferricin from Mus musculus (Mouse).